The following is a 223-amino-acid chain: Phosphoribosylformylglycinamidine synthase subunit PurQ (223 aa).

Positions 3-223 (SAVILLPGLN…LFAGALGITA (221 aa)) constitute a Glutamine amidotransferase type-1 domain. Cys87 serves as the catalytic Nucleophile. Active-site residues include His197 and Glu199.

Part of the FGAM synthase complex composed of 1 PurL, 1 PurQ and 2 PurS subunits.

It is found in the cytoplasm. It carries out the reaction N(2)-formyl-N(1)-(5-phospho-beta-D-ribosyl)glycinamide + L-glutamine + ATP + H2O = 2-formamido-N(1)-(5-O-phospho-beta-D-ribosyl)acetamidine + L-glutamate + ADP + phosphate + H(+). The enzyme catalyses L-glutamine + H2O = L-glutamate + NH4(+). Its pathway is purine metabolism; IMP biosynthesis via de novo pathway; 5-amino-1-(5-phospho-D-ribosyl)imidazole from N(2)-formyl-N(1)-(5-phospho-D-ribosyl)glycinamide: step 1/2. In terms of biological role, part of the phosphoribosylformylglycinamidine synthase complex involved in the purines biosynthetic pathway. Catalyzes the ATP-dependent conversion of formylglycinamide ribonucleotide (FGAR) and glutamine to yield formylglycinamidine ribonucleotide (FGAM) and glutamate. The FGAM synthase complex is composed of three subunits. PurQ produces an ammonia molecule by converting glutamine to glutamate. PurL transfers the ammonia molecule to FGAR to form FGAM in an ATP-dependent manner. PurS interacts with PurQ and PurL and is thought to assist in the transfer of the ammonia molecule from PurQ to PurL. The protein is Phosphoribosylformylglycinamidine synthase subunit PurQ of Brucella abortus biovar 1 (strain 9-941).